A 371-amino-acid polypeptide reads, in one-letter code: Queuine tRNA-ribosyltransferase (371 aa).

The active-site Proton acceptor is the Asp-90. Residues 90-94, Asp-144, Gln-189, and Gly-215 each bind substrate; that span reads DSGGF. Residues 246–252 are RNA binding; it reads GVGTPEN. Asp-265 (nucleophile) is an active-site residue. Residues 270–274 form an RNA binding; important for wobble base 34 recognition region; that stretch reads TRNAR. Residues Cys-303, Cys-305, Cys-308, and His-334 each contribute to the Zn(2+) site.

The protein belongs to the queuine tRNA-ribosyltransferase family. Homodimer. Within each dimer, one monomer is responsible for RNA recognition and catalysis, while the other monomer binds to the replacement base PreQ1. It depends on Zn(2+) as a cofactor.

The enzyme catalyses 7-aminomethyl-7-carbaguanine + guanosine(34) in tRNA = 7-aminomethyl-7-carbaguanosine(34) in tRNA + guanine. The protein operates within tRNA modification; tRNA-queuosine biosynthesis. In terms of biological role, catalyzes the base-exchange of a guanine (G) residue with the queuine precursor 7-aminomethyl-7-deazaguanine (PreQ1) at position 34 (anticodon wobble position) in tRNAs with GU(N) anticodons (tRNA-Asp, -Asn, -His and -Tyr). Catalysis occurs through a double-displacement mechanism. The nucleophile active site attacks the C1' of nucleotide 34 to detach the guanine base from the RNA, forming a covalent enzyme-RNA intermediate. The proton acceptor active site deprotonates the incoming PreQ1, allowing a nucleophilic attack on the C1' of the ribose to form the product. After dissociation, two additional enzymatic reactions on the tRNA convert PreQ1 to queuine (Q), resulting in the hypermodified nucleoside queuosine (7-(((4,5-cis-dihydroxy-2-cyclopenten-1-yl)amino)methyl)-7-deazaguanosine). The sequence is that of Queuine tRNA-ribosyltransferase from Helicobacter pylori (strain P12).